We begin with the raw amino-acid sequence, 500 residues long: Potassium/proton antiporter CemA (500 aa).

A helical transmembrane segment spans residues 129-149 (LFLTTIKTIFILFFVPFLVNF). An insert region spans residues 204–354 (HQTHRDSKPL…GSLDSIKNKD (151 aa)). 3 consecutive transmembrane segments (helical) span residues 378-398 (ITNF…LITL), 425-445 (ILLI…ELFF), and 461-481 (IFLL…YLIF).

Belongs to the CemA family.

It is found in the plastid. The protein resides in the chloroplast inner membrane. The catalysed reaction is K(+)(in) + H(+)(out) = K(+)(out) + H(+)(in). In terms of biological role, contributes to K(+)/H(+) antiport activity by supporting proton efflux to control proton extrusion and homeostasis in chloroplasts in a light-dependent manner to modulate photosynthesis. Prevents excessive induction of non-photochemical quenching (NPQ) under continuous-light conditions. Indirectly promotes efficient inorganic carbon uptake into chloroplasts. The polypeptide is Potassium/proton antiporter CemA (Chlamydomonas reinhardtii (Chlamydomonas smithii)).